Here is a 329-residue protein sequence, read N- to C-terminus: Sulfate-binding protein (329 aa).

Positions 1–19 (MNKWGVGLTFLLAATSVMA) are cleaved as a signal peptide.

Belongs to the prokaryotic sulfate-binding protein family.

It localises to the periplasm. Its function is as follows. This protein specifically binds sulfate and is involved in its transmembrane transport. The polypeptide is Sulfate-binding protein (sbp) (Escherichia coli (strain K12)).